Here is an 88-residue protein sequence, read N- to C-terminus: UPF0335 protein WD_0557 (88 aa).

The protein belongs to the UPF0335 family.

The polypeptide is UPF0335 protein WD_0557 (Wolbachia pipientis wMel).